The chain runs to 479 residues: Dihydrolipoyl dehydrogenase, mitochondrial (479 aa).

Residues phenylalanine 1–tyrosine 19 constitute a mitochondrion transit peptide. At lysine 50 the chain carries N6-acetyllysine; alternate. Lysine 50 bears the N6-succinyllysine; alternate mark. FAD is bound by residues glutamate 55–cysteine 64 and lysine 73. Cysteine 64 and cysteine 69 are joined by a disulfide. N6-acetyllysine; alternate occurs at positions 88, 106, 116, and 127. N6-succinyllysine; alternate occurs at positions 88, 106, 116, and 127. Glycine 138 provides a ligand contact to FAD. 2 positions are modified to N6-succinyllysine: lysine 143 and lysine 150. Threonine 167–serine 169 lines the FAD pocket. Residues glycine 204–glutamate 211 and glutamate 227 each bind NAD(+). An N6-succinyllysine mark is found at lysine 257 and lysine 261. Valine 262 is an NAD(+) binding site. The residue at position 269 (serine 269) is a Phosphoserine. Residue glycine 298 coordinates NAD(+). The residue at position 330 (lysine 330) is an N6-acetyllysine. FAD contacts are provided by residues aspartate 339 and methionine 345–histidine 348. Lysine 394 is subject to N6-acetyllysine; alternate. N6-succinyllysine; alternate is present on lysine 394. An N6-acetyllysine mark is found at lysine 401 and lysine 404. Lysine 414 bears the N6-succinyllysine mark. Histidine 471 (proton acceptor) is an active-site residue.

This sequence belongs to the class-I pyridine nucleotide-disulfide oxidoreductase family. In terms of assembly, homodimer. Part of the multimeric pyruvate dehydrogenase complex that contains multiple copies of pyruvate dehydrogenase (subunits PDHA (PDHA1 or PDHA2) and PDHB, E1), dihydrolipoamide acetyltransferase (DLAT, E2) and lipoamide dehydrogenase (DLD, E3). These subunits are bound to an inner core composed of about 48 DLAT and 12 PDHX molecules (by non covalent bonds). The 2-oxoglutarate dehydrogenase complex is composed of OGDH (2-oxoglutarate dehydrogenase; E1), DLST (dihydrolipoamide succinyltransferase; E2) and DLD (dihydrolipoamide dehydrogenase; E3). It contains multiple copies of the three enzymatic components (E1, E2 and E3). In the nucleus, the 2-oxoglutarate dehydrogenase complex associates with KAT2A. Interacts with PDHX. The cofactor is FAD. In terms of processing, tyrosine phosphorylated. As to expression, expressed in testis (at protein level).

The protein localises to the mitochondrion matrix. Its subcellular location is the nucleus. It localises to the cell projection. The protein resides in the cilium. It is found in the flagellum. The protein localises to the cytoplasmic vesicle. Its subcellular location is the secretory vesicle. It localises to the acrosome. The catalysed reaction is N(6)-[(R)-dihydrolipoyl]-L-lysyl-[protein] + NAD(+) = N(6)-[(R)-lipoyl]-L-lysyl-[protein] + NADH + H(+). Functionally, lipoamide dehydrogenase is a component of the glycine cleavage system as well as an E3 component of three alpha-ketoacid dehydrogenase complexes (pyruvate-, alpha-ketoglutarate-, and branched-chain amino acid-dehydrogenase complex). The 2-oxoglutarate dehydrogenase complex is mainly active in the mitochondrion. A fraction of the 2-oxoglutarate dehydrogenase complex also localizes in the nucleus and is required for lysine succinylation of histones: associates with KAT2A on chromatin and provides succinyl-CoA to histone succinyltransferase KAT2A. In monomeric form may have additional moonlighting function as serine protease. Involved in the hyperactivation of spermatazoa during capacitation and in the spermatazoal acrosome reaction. The protein is Dihydrolipoyl dehydrogenase, mitochondrial (DLD) of Mesocricetus auratus (Golden hamster).